We begin with the raw amino-acid sequence, 353 residues long: Neutral protease 2 homolog AO090001000135 (353 aa).

Residues 1-19 (MRFISVSSLLLALAPALNA) form the signal peptide. Positions 20-176 (VPVEVAGSAQ…TQAVKILERR (157 aa)) are excised as a propeptide. 2 disulfides stabilise this stretch: Cys182–Cys254 and Cys261–Cys279. His304 is a binding site for Zn(2+). Residue Glu305 is part of the active site. 2 residues coordinate Zn(2+): His308 and Asp319.

It belongs to the peptidase M35 family. The cofactor is Zn(2+).

Its subcellular location is the secreted. It catalyses the reaction Preferential cleavage of bonds with hydrophobic residues in P1'. Also 3-Asn-|-Gln-4 and 8-Gly-|-Ser-9 bonds in insulin B chain.. In terms of biological role, secreted metalloproteinase that allows assimilation of proteinaceous substrates. Shows high activities on basic nuclear substrates such as histone and protamine. This chain is Neutral protease 2 homolog AO090001000135, found in Aspergillus oryzae (strain ATCC 42149 / RIB 40) (Yellow koji mold).